Consider the following 567-residue polypeptide: Oxygen-dependent choline dehydrogenase (567 aa).

4–33 provides a ligand contact to FAD; it reads DYIIIGAGSAGNVLAARLTEDADVTVLLLE. The Proton acceptor role is filled by His-473.

Belongs to the GMC oxidoreductase family. FAD serves as cofactor.

The catalysed reaction is choline + A = betaine aldehyde + AH2. It catalyses the reaction betaine aldehyde + NAD(+) + H2O = glycine betaine + NADH + 2 H(+). It participates in amine and polyamine biosynthesis; betaine biosynthesis via choline pathway; betaine aldehyde from choline (cytochrome c reductase route): step 1/1. Involved in the biosynthesis of the osmoprotectant glycine betaine. Catalyzes the oxidation of choline to betaine aldehyde and betaine aldehyde to glycine betaine at the same rate. This is Oxygen-dependent choline dehydrogenase from Yersinia pestis bv. Antiqua (strain Antiqua).